The sequence spans 427 residues: Glutamyl-tRNA reductase (427 aa).

Residues 49 to 52, Ser105, 110 to 112, and Gln116 each bind substrate; these read TCNR and EPQ. The active-site Nucleophile is Cys50. 185-190 lines the NADP(+) pocket; sequence AAGEMN.

It belongs to the glutamyl-tRNA reductase family. In terms of assembly, homodimer.

It catalyses the reaction (S)-4-amino-5-oxopentanoate + tRNA(Glu) + NADP(+) = L-glutamyl-tRNA(Glu) + NADPH + H(+). Its pathway is porphyrin-containing compound metabolism; protoporphyrin-IX biosynthesis; 5-aminolevulinate from L-glutamyl-tRNA(Glu): step 1/2. In terms of biological role, catalyzes the NADPH-dependent reduction of glutamyl-tRNA(Glu) to glutamate 1-semialdehyde (GSA). The sequence is that of Glutamyl-tRNA reductase from Acinetobacter baumannii (strain AB307-0294).